The primary structure comprises 259 residues: Major cell-binding factor (259 aa).

The signal sequence occupies residues 1-26; it reads MVFRKSLLKLAVFALGACVAFSNANA.

It belongs to the bacterial solute-binding protein 3 family.

It is found in the cell surface. Its function is as follows. Common antigen and a major cell adherence molecule. Most probably involved, with PEB1C, in a binding-protein-dependent transport system for an amino acid. May be involved in binding to intestinal cells. The sequence is that of Major cell-binding factor (peb1A) from Campylobacter jejuni subsp. jejuni serotype O:23/36 (strain 81-176).